The primary structure comprises 365 residues: Mitogen-activated protein kinase p38b (365 aa).

One can recognise a Protein kinase domain in the interval 24–311 (YQNLQPVGQG…AEQALAHPYM (288 aa)). ATP-binding positions include 30–38 (VGQGAYGQV) and K53. D153 serves as the catalytic Proton acceptor. Position 183 is a phosphothreonine (T183). The TXY motif lies at 183 to 185 (TGY). Y185 is modified (phosphotyrosine).

The protein belongs to the protein kinase superfamily. CMGC Ser/Thr protein kinase family. MAP kinase subfamily. The cofactor is Mg(2+). In terms of processing, dually phosphorylated on Thr-183 and Tyr-185, which activates the enzyme. In terms of tissue distribution, at mid-embryogenesis, highest expression is seen in developing anterior and posterior midguts. Almost ubiquitous expression throughout all development.

The protein resides in the nucleus. The catalysed reaction is L-seryl-[protein] + ATP = O-phospho-L-seryl-[protein] + ADP + H(+). It carries out the reaction L-threonyl-[protein] + ATP = O-phospho-L-threonyl-[protein] + ADP + H(+). With respect to regulation, activated by threonine and tyrosine phosphorylation by Mkk3. In terms of biological role, kinase involved in dpp signal transduction pathway in the process of wing morphogenesis when the levels of dpp are enhanced or inhibited. May down-regulate insect immunity gene expression after prolonged infection. The protein is Mitogen-activated protein kinase p38b of Drosophila melanogaster (Fruit fly).